The chain runs to 375 residues: Chaperone protein DnaJ (375 aa).

The region spanning 5 to 70 (GYYEVLGVSK…QKRQAYDQFG (66 aa)) is the J domain. The CR-type zinc-finger motif lies at 142 to 220 (GKEYKIEIPR…CKGEGLTEKR (79 aa)). Residues cysteine 155, cysteine 158, cysteine 172, cysteine 175, cysteine 194, cysteine 197, cysteine 208, and cysteine 211 each coordinate Zn(2+). CXXCXGXG motif repeat units lie at residues 155 to 162 (CVDCTGSG), 172 to 179 (CPDCSGTG), 194 to 201 (CPRCKGKG), and 208 to 215 (CKTCKGEG).

The protein belongs to the DnaJ family. As to quaternary structure, homodimer. Zn(2+) is required as a cofactor.

The protein resides in the cytoplasm. Its function is as follows. Participates actively in the response to hyperosmotic and heat shock by preventing the aggregation of stress-denatured proteins and by disaggregating proteins, also in an autonomous, DnaK-independent fashion. Unfolded proteins bind initially to DnaJ; upon interaction with the DnaJ-bound protein, DnaK hydrolyzes its bound ATP, resulting in the formation of a stable complex. GrpE releases ADP from DnaK; ATP binding to DnaK triggers the release of the substrate protein, thus completing the reaction cycle. Several rounds of ATP-dependent interactions between DnaJ, DnaK and GrpE are required for fully efficient folding. Also involved, together with DnaK and GrpE, in the DNA replication of plasmids through activation of initiation proteins. The chain is Chaperone protein DnaJ from Leptospira biflexa serovar Patoc (strain Patoc 1 / Ames).